The following is a 492-amino-acid chain: MIARCIMVLGTSSGAGKSWLATALCRWFSDQGLRVAPFKAQNMSNNARVVAAPGGGQGEIGSAQYFQALAARTEPEVRMNPVLLKPEADTRSQVVLMGQVSEELTRMPWRGRSVHVWPHVAAALDALRAENDVVVIEGAGSPAEINLHANDIVNMRVARHAGAHGLLVTDIDRGGAFAHLYGTWALLPEDERALIQGFVLNKFRGDAALLAPAPDMLRERTGVPTVATIPMQWRHGLPEEDGVFDDAGHVRAGAGGAVHTTVAVVAYPRISNLDEFQPLKGVPGLRLVWARSPAEVAGADWIVLPGSKATAADLAWLRAQGLDAAIAAHAARGGRVLGICGGLQMLGEALIDTHGVDGNAPGLGLLPLVTAFDPAKTVRRTRTAFGALRGAWSALSGVAVQGYEIRHGRTAQHPAMAAAGDVAHPAIPGLAWQNARGNVLGLYLHGLFEDAVALRALFGADVPTLDAVFDRLARGVDEWFDPAWRAARRAGR.

The 195-residue stretch at 259–453 (HTTVAVVAYP…LHGLFEDAVA (195 aa)) folds into the GATase cobBQ-type domain. Residue Cys340 is the Nucleophile of the active site. His445 is an active-site residue.

Belongs to the CobB/CobQ family. CobQ subfamily.

It functions in the pathway cofactor biosynthesis; adenosylcobalamin biosynthesis. Its function is as follows. Catalyzes amidations at positions B, D, E, and G on adenosylcobyrinic A,C-diamide. NH(2) groups are provided by glutamine, and one molecule of ATP is hydrogenolyzed for each amidation. The polypeptide is Cobyric acid synthase (Paracidovorax citrulli (strain AAC00-1) (Acidovorax citrulli)).